The chain runs to 1843 residues: Proteasome activator complex subunit 4 (1843 aa).

Over residues 1–11 (MEPAERAGVGE) the composition is skewed to low complexity. The tract at residues 1–25 (MEPAERAGVGEPPEPGGRPEPGPRG) is disordered. Residues 12–22 (PPEPGGRPEPG) are compositionally biased toward pro residues. 2 HEAT repeats span residues 475–519 (PEGP…LVDC) and 998–1037 (NFCC…NHSG). Residue Ser-1121 is modified to Phosphoserine. HEAT repeat units lie at residues 1179–1217 (RVLP…QLKR) and 1354–1392 (DAFL…GSKH). Ser-1614 carries the post-translational modification Phosphoserine. HEAT repeat units lie at residues 1636-1674 (PHQV…YNLF) and 1680-1718 (EDAV…CNFL). A bromodomain-like (BRDL) region spans residues 1650 to 1738 (ARSSSWHARY…EQLCKTKLPK (89 aa)). Ser-1746 carries the post-translational modification Phosphoserine.

It belongs to the BLM10 family. Homodimer. Interacts with the 20S and 26S proteasomes. Component of the spermatoproteasome, a form of the proteasome specifically found in testis.

It is found in the cytoplasm. It localises to the cytosol. The protein localises to the nucleus. Its subcellular location is the nucleus speckle. In terms of biological role, associated component of the proteasome that specifically recognizes acetylated histones and promotes ATP- and ubiquitin-independent degradation of core histones during spermatogenesis and DNA damage response. Recognizes and binds acetylated histones via its bromodomain-like (BRDL) region and activates the proteasome by opening the gated channel for substrate entry. Binds to the core proteasome via its C-terminus, which occupies the same binding sites as the proteasomal ATPases, opening the closed structure of the proteasome via an active gating mechanism. Component of the spermatoproteasome, a form of the proteasome specifically found in testis: binds to acetylated histones and promotes degradation of histones, thereby participating actively to the exchange of histones during spermatogenesis. Also involved in DNA damage response in somatic cells, by promoting degradation of histones following DNA double-strand breaks. The polypeptide is Proteasome activator complex subunit 4 (Homo sapiens (Human)).